The sequence spans 237 residues: DNA replication inhibitor toxin SocB (237 aa).

As to quaternary structure, interacts with cognate antitoxin SocA and with beta sliding clamp (dnaN). Post-translationally, degraded by ClpXP, recognition of SocB by ClpX requires SocA.

It is found in the cytoplasm. Toxic component of an atypical type II toxin-antitoxin (TA) system. Upon overexpression in the absence of its cognate antitoxin SocA, leads to inhibition of colony formation, cellular filamentation, incomplete DNA replication and induction of the SOS response. Exercises toxicity by binding the beta sliding clamp (dnaN), blocking DNA replication and leading to premature replication fork collapse and incomplete cell division. Unlike most type II TA systems, the SocB toxin is unstable and targeted by its cognate antitoxin SocA for degradation by ClpXP. Not toxic upon expression in E.coli. The sequence is that of DNA replication inhibitor toxin SocB from Caulobacter vibrioides (strain NA1000 / CB15N) (Caulobacter crescentus).